We begin with the raw amino-acid sequence, 1223 residues long: Kinesin-like protein costa (1223 aa).

The 391-residue stretch at 4 to 394 folds into the Kinesin motor domain; it reads PIQVAVRICP…LQFAFKVQCV (391 aa). Positions 13 to 90 are disordered; sequence PYTEPSENRK…LPTDSNGNEN (78 aa). Basic and acidic residues predominate over residues 39–62; sequence AKAESFSDSEDNKNDASNRQRPEE. 178–185 contacts ATP; that stretch reads GQRGQGKT. Disordered regions lie at residues 494 to 528, 560 to 604, and 625 to 646; these read RSQK…ESQR, KHPK…SIQP, and TAQP…ESSA. The segment covering 569–593 has biased composition (basic and acidic residues); it reads QERDKESKLDAPPEKDKEKIEERKT. 3 coiled-coil regions span residues 658-743, 773-825, and 982-1015; these read AAAN…QGRE, ESGQ…GASG, and NKVI…ERVL. A disordered region spans residues 774–799; that stretch reads SGQKLKKLQQSMAESRKQQEELEKKI. A compositionally biased stretch (basic and acidic residues) spans 787–799; the sequence is ESRKQQEELEKKI. The segment covering 1162-1178 has biased composition (low complexity); that stretch reads TTTATATTTTTTTTTTT. Positions 1162–1188 are disordered; that stretch reads TTTATATTTTTTTTTTTGGKGKERGLP.

The protein belongs to the TRAFAC class myosin-kinesin ATPase superfamily. Kinesin family. KIF27 subfamily. Homodimer (Potential). Binds microtubules. Interacts with ci, smo, sgg, CkIalpha and protein kinase A catalytic subunit.

It is found in the cytoplasm. Its subcellular location is the cytoskeleton. Functionally, regulates cubitus interruptus (ci) processing by recruiting multiple kinases to promote its efficient phosphorylation. Scaffolds multiple kinases and ci into proximity to promote its hyperphosphorylation, which then targets it for SCFSlimb/proteasome-mediated processing to generate its repressor form. Hh signaling inhibits ci phosphorylation by interfering with the cos-ci-kinases complex formation. The protein is Kinesin-like protein costa (cos) of Drosophila pseudoobscura pseudoobscura (Fruit fly).